The sequence spans 85 residues: Progonadoliberin-2 (85 aa).

The N-terminal stretch at 1-23 is a signal peptide; the sequence is MCVSRLVLLFGLLLCVGAQLSNA. The residue at position 24 (glutamine 24) is a Pyrrolidone carboxylic acid. Glycine 33 carries the glycine amide modification.

Belongs to the GnRH family.

The protein resides in the secreted. Functionally, stimulates the secretion of gonadotropins. This is Progonadoliberin-2 (gnrh2) from Morone saxatilis (Striped bass).